The primary structure comprises 376 residues: Alcohol dehydrogenase 1 (376 aa).

Serine 2 is modified (N-acetylserine). Residues cysteine 47, histidine 68, cysteine 98, cysteine 101, cysteine 104, cysteine 112, and cysteine 176 each contribute to the Zn(2+) site. NAD(+)-binding positions include 201-206 (GLGGVG), aspartate 225, lysine 230, 294-296 (VGV), and arginine 371.

This sequence belongs to the zinc-containing alcohol dehydrogenase family. Class-I subfamily. Homodimer. The cofactor is Zn(2+).

Its subcellular location is the cytoplasm. It carries out the reaction a primary alcohol + NAD(+) = an aldehyde + NADH + H(+). It catalyses the reaction a secondary alcohol + NAD(+) = a ketone + NADH + H(+). This chain is Alcohol dehydrogenase 1 (ADH1), found in Gallus gallus (Chicken).